Consider the following 359-residue polypeptide: Glucose 1-dehydrogenase (359 aa).

C39 is a Zn(2+) binding site. Position 41 (T41) interacts with substrate. Positions 64 and 65 each coordinate Zn(2+). Residues E116 and E152 each contribute to the substrate site. E152 lines the Zn(2+) pocket. Residue A183 to I186 coordinates NADP(+).

This sequence belongs to the zinc-containing alcohol dehydrogenase family. Glucose 1-dehydrogenase subfamily. Zn(2+) is required as a cofactor.

The catalysed reaction is D-glucose + NAD(+) = D-glucono-1,5-lactone + NADH + H(+). It carries out the reaction D-glucose + NADP(+) = D-glucono-1,5-lactone + NADPH + H(+). Its function is as follows. Catalyzes the NAD(P)(+)-dependent oxidation of D-glucose to D-gluconate via gluconolactone. Can utilize both NAD(+) and NADP(+) as electron acceptor. Is involved in the degradation of glucose through a non-phosphorylative variant of the Entner-Doudoroff pathway. The chain is Glucose 1-dehydrogenase from Methanocella arvoryzae (strain DSM 22066 / NBRC 105507 / MRE50).